Consider the following 509-residue polypeptide: Flotillin-like protein FloT (509 aa).

The Cytoplasmic portion of the chain corresponds to 1–3; sequence MTM. Residues 4-24 lie within the membrane without spanning it; that stretch reads PIIMIIGVVFFLLIALIAVFI. Topologically, residues 25 to 509 are cytoplasmic; sequence TKYRTAGPDE…KEAKTIQKSE (485 aa). Residues 119–301 are PHB domain; that stretch reads AAEQFLGKSK…KIIERQKQIE (183 aa). The segment at 203 to 509 is required for correct localization; the sequence is RIAQVKRDAD…KEAKTIQKSE (307 aa). 4 short sequence motifs (EA repeat) span residues 342-344, 357-360, 370-373, and 390-394; these read AEA, AEAE, and AEAEA. The segment at 485-509 is not required for correct localization; sequence KGNVKQSINELTNEIKEAKTIQKSE.

The protein belongs to the band 7/mec-2 family. Flotillin subfamily. Homooligomerizes. Oligomerizes in very large complexes in vitro. Interacts with FloA, FtsH, FtsX, OppA, SdhA and SecY in detergent-resistant membrane (DRM) fractions. Interacts with FtsH at midcell. Interacts with FloA. Interacts in vivo with KinC, FloA, FtsH and ResE. Interacts with ResE, colocalizes with ResE in FloT-only membrane rafts. Another study shows nearly complete colocalization with NfeD2, but only minor colocalization with FtsH or KinC.

Its subcellular location is the cell membrane. The protein resides in the membrane raft. Found in functional membrane microdomains (FMM) that may be equivalent to eukaryotic membrane rafts. FMMs are highly dynamic and increase in number as cells age. FloA and FloT function is partially redundant; double deletions have marked synthetic phenotypes. Flotillins are thought to be important factors in membrane fluidity, especially during periods of rapid growth in rich media. Whether specific proteins are associated with FMMs is controversial; in one study FloT rafts have been shown to include proteins involved in adaptation to stationary phase, while FloA-FloT rafts include proteins involved in differentiation including sporulation, biofilm formation and DNA uptake competence. Another (more finely resolved) study only showed association of NfeD2 with FloT rafts of all the proteins examined. Aids homooligomerization of KinC and KinD but not KinB, may prevent incorrect hetero-association of the above kinases. Simultaneous overexpression of both FloA and FloT leads to defects in cell division and differentiation, in part caused by stabilization of FtsH and its subsequent increased ability to degrade proteins. Cells make more biofilm, are about half as long, have less EzrA and more frequent Z-rings. Involved in spatial organization of membranes, perhaps recruiting proteins (e.g. NfeD2) to specific membrane regions. Plays a role in phosphorylation of master regulator Spo0A, an early sporulation event. Plays a non-redundant role with dynamin-like protein A (dynA) in membrane dynamics and cell shape. This Bacillus subtilis (strain 168) protein is Flotillin-like protein FloT.